A 701-amino-acid chain; its full sequence is Lutropin-choriogonadotropic hormone receptor (701 aa).

Positions 1-26 (MGRPSLALRLLLALLLLPPPAPLLWA) are cleaved as a signal peptide. Residues 27–365 (LRPAPCPEPC…EDIMGYNFLR (339 aa)) are Extracellular-facing. N-linked (GlcNAc...) asparagine glycosylation is present at asparagine 101. LRR repeat units follow at residues 124-149 (LPRL…IFSS), 151-173 (FNFI…AFQG), 174-198 (MNNE…AFNG), 200-222 (TLIS…AFRG), 223-246 (ATGP…GLES), and 250-271 (LIAT…TNLL). 2 N-linked (GlcNAc...) asparagine glycosylation sites follow: asparagine 176 and asparagine 197. N-linked (GlcNAc...) asparagine glycosylation is found at asparagine 293, asparagine 301, and asparagine 315. Tyrosine 333 is subject to Sulfotyrosine. The chain crosses the membrane as a helical span at residues 366–387 (VLIWLINILAITGNVTVLFVLL). Over 388–397 (TSRYKLTVPR) the chain is Cytoplasmic. The chain crosses the membrane as a helical span at residues 398-418 (FLMCNLSFADFCMGLYLLLIA). At 419-441 (SVDAQTKGQYYNHAIDWQTGSGC) the chain is on the extracellular side. Cysteine 441 and cysteine 516 are oxidised to a cystine. A helical transmembrane segment spans residues 442 to 464 (SAAGFFTVFASELSVYTLTVITL). Over 465-484 (ERWHTITYAIQLDQKLRLKH) the chain is Cytoplasmic. The chain crosses the membrane as a helical span at residues 485 to 507 (AIPVMLGGWLFSTLIAVLPLVGV). Topologically, residues 508–527 (SNYMKVSICLPMDVESTLSQ) are extracellular. Residues 528 to 551 (VYILTILILNVMAFIIICACYIKI) form a helical membrane-spanning segment. Residues 552–572 (YFAVQNPELMATNKDTKIAKK) are Cytoplasmic-facing. Residues 573 to 596 (MAVLIFTDFTCMAPISFFAISAAF) form a helical membrane-spanning segment. At 597 to 607 (KVPLITVTNSK) the chain is on the extracellular side. Residues 608–629 (VLLVLFYPVNSCANPFLYAIFT) traverse the membrane as a helical segment. Over 630-701 (KAFQRDFFLL…VLDKTCYKEC (72 aa)) the chain is Cytoplasmic. Residues cysteine 645 and cysteine 646 are each lipidated (S-palmitoyl cysteine).

This sequence belongs to the G-protein coupled receptor 1 family. FSH/LSH/TSH subfamily. Post-translationally, sulfated.

It is found in the cell membrane. Receptor for lutropin-choriogonadotropic hormone. The activity of this receptor is mediated by G proteins which activate adenylate cyclase. This Bos taurus (Bovine) protein is Lutropin-choriogonadotropic hormone receptor (LHCGR).